Reading from the N-terminus, the 265-residue chain is Early E4 31 kDa protein (265 aa).

It belongs to the adenoviridae E4 30 to 34 kDa protein family. Interacts with E1B-55k.

The protein resides in the host nucleus. The protein localises to the host cytoplasm. Functionally, plays a major role to prevent cellular inhibition of viral genome replication by nuclear bodies. Assembles an SCF-like E3 ubiquitin ligase complex based on the cellular proteins ELOB, ELOC, CUL5 and RBX1, in cooperation with viral E1B-55K. This viral RING-type ligase ubiquitinates cellular substrates prior to proteasomal degradation: p53/TP53, LIG4, MRE11-RAD50-NBS1 (MRN) complex, ITGA3, DAXX and BLM. The sequence is that of Early E4 31 kDa protein from Canis lupus familiaris (Dog).